A 504-amino-acid chain; its full sequence is Maturase K (504 aa).

Belongs to the intron maturase 2 family. MatK subfamily.

The protein localises to the plastid. Its subcellular location is the chloroplast. Its function is as follows. Usually encoded in the trnK tRNA gene intron. Probably assists in splicing its own and other chloroplast group II introns. This is Maturase K from Alliaria petiolata (Garlic mustard).